A 305-amino-acid polypeptide reads, in one-letter code: Putative S-adenosyl-L-methionine-dependent methyltransferase MAB_4607c (305 aa).

S-adenosyl-L-methionine contacts are provided by residues D128 and 155–156; that span reads DL.

The protein belongs to the UPF0677 family.

In terms of biological role, exhibits S-adenosyl-L-methionine-dependent methyltransferase activity. In Mycobacteroides abscessus (strain ATCC 19977 / DSM 44196 / CCUG 20993 / CIP 104536 / JCM 13569 / NCTC 13031 / TMC 1543 / L948) (Mycobacterium abscessus), this protein is Putative S-adenosyl-L-methionine-dependent methyltransferase MAB_4607c.